Reading from the N-terminus, the 382-residue chain is Pyrimidine monooxygenase RutA (382 aa).

FMN is bound by residues 68-69, N134, E143, 159-160, and S209; these read IK and RY.

Belongs to the NtaA/SnaA/DszA monooxygenase family. RutA subfamily.

The enzyme catalyses uracil + FMNH2 + NADH + O2 = (Z)-3-ureidoacrylate + FMN + NAD(+) + H2O + H(+). It catalyses the reaction thymine + FMNH2 + NADH + O2 = (Z)-2-methylureidoacrylate + FMN + NAD(+) + H2O + H(+). Functionally, catalyzes the pyrimidine ring opening between N-3 and C-4 by an unusual flavin hydroperoxide-catalyzed mechanism, adding oxygen atoms in the process to yield ureidoacrylate peracid, that immediately reacts with FMN forming ureidoacrylate and FMN-N(5)-oxide. The FMN-N(5)-oxide reacts spontaneously with NADH to produce FMN. Requires the flavin reductase RutF to regenerate FMN in vivo. In Escherichia coli O45:K1 (strain S88 / ExPEC), this protein is Pyrimidine monooxygenase RutA.